The chain runs to 134 residues: Large ribosomal subunit protein bL17 (134 aa).

The protein belongs to the bacterial ribosomal protein bL17 family. As to quaternary structure, part of the 50S ribosomal subunit. Contacts protein L32.

The chain is Large ribosomal subunit protein bL17 from Thioalkalivibrio sulfidiphilus (strain HL-EbGR7).